The primary structure comprises 58 residues: Large ribosomal subunit protein bL32 (58 aa).

It belongs to the bacterial ribosomal protein bL32 family.

This is Large ribosomal subunit protein bL32 from Carboxydothermus hydrogenoformans (strain ATCC BAA-161 / DSM 6008 / Z-2901).